The chain runs to 548 residues: Nonribosomal peptide synthetase 8 (548 aa).

The region spanning 1 to 77 (MNSLDQWRDT…QLRGENRSGP (77 aa)) is the Carrier domain. Residue Ser-35 is modified to O-(pantetheine 4'-phosphoryl)serine. A condensation region spans residues 122–537 (MAPISSIQEF…FKSLIAELAA (416 aa)).

It belongs to the NRP synthetase family.

The protein operates within mycotoxin biosynthesis. Nonribosomal peptide synthetase; part of the gene cluster that mediates the biosynthesis of fumonisins B1 (FB1), B2 (FB2), B3 (FB3), and B4 (FB4), which are carcinogenic mycotoxins. Within the pathway FUM14 catalyzes esterification of CoA-activated tricarballylic acid to the C-14 and C-15 hydroxyls of the fumonisin backbone. The biosynthesis starts with the FUM1-catalyzed carbon chain assembly from one molecule of acetyl-CoA, eight molecules of malonyl-CoA, and two molecules of methionine (in S-adenosyl form). The C18 polyketide chain is released from the enzyme by a nucleophilic attack of a carbanion, which is derived from R-carbon of alanine by decarboxylation, on the carbonyl carbon of polyketide acyl chain. This step is catalyzed by the pyridoxal 5'-phosphate-dependent aminoacyl transferase FUM8. The resultant 3-keto intermediate is then stereospecifically reduced to a 3-hydroxyl product by reductase FUM13. Subsequent oxidations at C-10 by the cytochrome P450 monooxygenase FUM2, C-14 and C-15 by FUM6, FUM12 or FUM15, tricarballylic esterification of the hydroxyl groups on C-14 and C-15 by acyltransferase FUM14, and C-5 hydroxylation by 2-keto-glutarate-dependent dioxygenase FUM3 furnish the biosynthesis of fumonisins. The tricarballylic moieties are most likely derived from the citric acid cycle, and their addition to the carbon backbone may involve FUM7, FUM10, FUM11 and FUM14. The polypeptide is Nonribosomal peptide synthetase 8 (Gibberella moniliformis (strain M3125 / FGSC 7600) (Maize ear and stalk rot fungus)).